Reading from the N-terminus, the 92-residue chain is Small ribosomal subunit protein uS19c (92 aa).

This sequence belongs to the universal ribosomal protein uS19 family.

The protein resides in the plastid. The protein localises to the chloroplast. Functionally, protein S19 forms a complex with S13 that binds strongly to the 16S ribosomal RNA. This is Small ribosomal subunit protein uS19c from Phaeodactylum tricornutum (strain CCAP 1055/1).